The primary structure comprises 301 residues: Glycine--tRNA ligase alpha subunit (301 aa).

The protein belongs to the class-II aminoacyl-tRNA synthetase family. Tetramer of two alpha and two beta subunits.

It localises to the cytoplasm. It catalyses the reaction tRNA(Gly) + glycine + ATP = glycyl-tRNA(Gly) + AMP + diphosphate. This is Glycine--tRNA ligase alpha subunit from Shewanella frigidimarina (strain NCIMB 400).